Here is a 235-residue protein sequence, read N- to C-terminus: DUP240 protein DFP4 (235 aa).

At 1–44 the chain is on the cytoplasmic side; that stretch reads MSSELLISNSKPRPEGLRKLCEGETVILPRDITPSKCAYFLKQN. A helical transmembrane segment spans residues 45–65; the sequence is IVFISYIFIHIIITIILNRLA. The Extracellular portion of the chain corresponds to 66–72; it reads LSAHGNT. The chain crosses the membrane as a helical span at residues 73–93; it reads LIIILAALLITISLFLLLLLP. Residues 94–235 are Cytoplasmic-facing; that stretch reads YLSCSRYKLR…DKYPEMGVTV (142 aa).

The protein belongs to the DUP/COS family. In terms of assembly, interacts according to large scale protein interaction studies with BZZ1, SRB4 and SUA7.

The protein localises to the cell membrane. The chain is DUP240 protein DFP4 from Saccharomyces cerevisiae (strain ATCC 204508 / S288c) (Baker's yeast).